A 139-amino-acid chain; its full sequence is Phosphoribosyl-AMP cyclohydrolase (139 aa).

Position 95 (aspartate 95) interacts with Mg(2+). Position 96 (cysteine 96) interacts with Zn(2+). Mg(2+)-binding residues include aspartate 97 and aspartate 99. Residues cysteine 114 and cysteine 121 each coordinate Zn(2+).

This sequence belongs to the PRA-CH family. As to quaternary structure, homodimer. It depends on Mg(2+) as a cofactor. The cofactor is Zn(2+).

Its subcellular location is the cytoplasm. It carries out the reaction 1-(5-phospho-beta-D-ribosyl)-5'-AMP + H2O = 1-(5-phospho-beta-D-ribosyl)-5-[(5-phospho-beta-D-ribosylamino)methylideneamino]imidazole-4-carboxamide. It participates in amino-acid biosynthesis; L-histidine biosynthesis; L-histidine from 5-phospho-alpha-D-ribose 1-diphosphate: step 3/9. Catalyzes the hydrolysis of the adenine ring of phosphoribosyl-AMP. This chain is Phosphoribosyl-AMP cyclohydrolase, found in Chelativorans sp. (strain BNC1).